We begin with the raw amino-acid sequence, 457 residues long: MDHLPIFCQLRDRDCLIVGGGDVAERKARLLLDAGARLTVNALAFIPQFTAWADAGMLTLVEGPFDESLLDTCWLAIAATDDDALNQRVSEAAESRRIFCNVVDAPKAASFIMPSIIDRSPLMVAVSSGGTSPVLARLLREKLESLLPLHLGQVAKYAGQLRGRVKQQFATMGERRRFWEKLFVNDRLAQSLANNDQKAITETTEQLINEPLDHRGEVVLVGAGPGDAGLLTLKGLQQIQQADVVVYDRLVSDDIMNLIRRDADRVFVGKRAGYHCVPQEEINQILLREAQKGKRVVRLKGGDPFIFGRGGEELETLCNAGIPFSVVPGITAASGCSAYSGIPLTHRDYAQSVRLITGHLKTGGELDWENLAAEKQTLVFYMGLNQAATIQQKLIEYGMPGEMPVAIVENGTAVTQRVIDGTLTQLGELAQQMNSPSLIIIGRVVGLRDKLNWFSNH.

Residues 1–204 are precorrin-2 dehydrogenase /sirohydrochlorin ferrochelatase; that stretch reads MDHLPIFCQL…NDQKAITETT (204 aa). NAD(+) contacts are provided by residues 22 to 23 and 43 to 44; these read DV and LA. S128 bears the Phosphoserine mark. The segment at 216–457 is uroporphyrinogen-III C-methyltransferase; sequence GEVVLVGAGP…RDKLNWFSNH (242 aa). Residue P225 coordinates S-adenosyl-L-methionine. D248 functions as the Proton acceptor in the catalytic mechanism. K270 serves as the catalytic Proton donor. Residues 301–303, I306, 331–332, M382, and G411 contribute to the S-adenosyl-L-methionine site; these read GGD and TA.

The protein in the N-terminal section; belongs to the precorrin-2 dehydrogenase / sirohydrochlorin ferrochelatase family. This sequence in the C-terminal section; belongs to the precorrin methyltransferase family.

The catalysed reaction is uroporphyrinogen III + 2 S-adenosyl-L-methionine = precorrin-2 + 2 S-adenosyl-L-homocysteine + H(+). It catalyses the reaction precorrin-2 + NAD(+) = sirohydrochlorin + NADH + 2 H(+). The enzyme catalyses siroheme + 2 H(+) = sirohydrochlorin + Fe(2+). Its pathway is cofactor biosynthesis; adenosylcobalamin biosynthesis; precorrin-2 from uroporphyrinogen III: step 1/1. It participates in cofactor biosynthesis; adenosylcobalamin biosynthesis; sirohydrochlorin from precorrin-2: step 1/1. The protein operates within porphyrin-containing compound metabolism; siroheme biosynthesis; precorrin-2 from uroporphyrinogen III: step 1/1. It functions in the pathway porphyrin-containing compound metabolism; siroheme biosynthesis; siroheme from sirohydrochlorin: step 1/1. Its pathway is porphyrin-containing compound metabolism; siroheme biosynthesis; sirohydrochlorin from precorrin-2: step 1/1. Multifunctional enzyme that catalyzes the SAM-dependent methylations of uroporphyrinogen III at position C-2 and C-7 to form precorrin-2 via precorrin-1. Then it catalyzes the NAD-dependent ring dehydrogenation of precorrin-2 to yield sirohydrochlorin. Finally, it catalyzes the ferrochelation of sirohydrochlorin to yield siroheme. This is Siroheme synthase from Escherichia coli O45:K1 (strain S88 / ExPEC).